Reading from the N-terminus, the 1068-residue chain is Leucine zipper protein 1 (1068 aa).

A2 carries the post-translational modification N-acetylalanine. A coiled-coil region spans residues 11–354 (ASNRHLRFKL…KLQVRKQKEL (344 aa)). 3 disordered regions span residues 251–292 (LSSK…VKDL), 375–402 (TKLKGHGSEASVSKHTSRELSPQHKRER), and 432–558 (AAKA…QAVE). The segment covering 254–292 (KESKRKGSLDYLKQVENETRDKSENEKNRNQEDNKVKDL) has biased composition (basic and acidic residues). 8 positions are modified to phosphoserine: S256, S261, S395, S513, S571, S575, S612, and S660. Positions 510-519 (RTFSDSTHVS) are enriched in polar residues. The disordered stretch occupies residues 677–700 (TTITPEPEPKPQPNSREKVKSRGG). The residue at position 680 (T680) is a Phosphothreonine. Residues S691 and S746 each carry the phosphoserine modification. The segment at 782 to 829 (QKSTSKSVTSKVTSSITIYPSDSSGPRAVPSEAPRERHTSTSNIQVGP) is disordered. The segment covering 785-796 (TSKSVTSKVTSS) has biased composition (low complexity). The segment at 834 to 884 (AISNHVSSPLELSIHKHDITLQLTEAERVGDGSPKNRAEMVVSRSSILIKP) is required for interaction with FLNA. S906 carries the phosphoserine modification. Residues 924-945 (RDLKCSEDPPTGIGRNMEATNA) form a disordered region. The residue at position 952 (T952) is a Phosphothreonine. 2 disordered regions span residues 959–995 (QPRSQPSEQGARRVGNSGDAPELSPRRTQSSLTASEV) and 1033–1068 (NPLEHSELPGKQGLPEPEPVWTEERLHPAKPYAEED). Residues 984–994 (RRTQSSLTASE) show a composition bias toward polar residues. S988 is modified (phosphoserine).

As to quaternary structure, component of the CERF-1 ISWI chromatin remodeling complex (also called the CECR2-containing remodeling factor (CERF) complex) at least composed of CECR2 and SMARCA1. Component of the CERF-5 ISWI chromatin remodeling complex at least composed of CECR2 and SMARCA5/SNF2H. LUZP1 is detected as part of the CERF-1 and CERF-5 complexes in embryonic stem (ES) cells where it is involved in complex stabilization but is not detected in the complexes in the testis. Interacts (via C-terminus) with LIMA1/EPLIN; both proteins restrict ciliation and may work together to regulate this process. Interacts with myosin light chain MYL9; the interaction results in inhibition of phosphorylation of MYL9 by DAPK3. Interacts with DAPK3; the interaction is likely to occur throughout the cell cycle and reduces the LUZP1-mediated suppression of MYL9 phosphorylation. Interacts with the chromosomal passenger complex (CPC); CPC kinase activity is required for localization of LUZP1 to the centromere. As to expression, predominantly expressed in the brain (at protein level).

The protein localises to the cytoplasm. The protein resides in the cytoskeleton. Its subcellular location is the microtubule organizing center. It is found in the centrosome. It localises to the cilium basal body. The protein localises to the midbody. The protein resides in the chromosome. Its subcellular location is the centromere. It is found in the spindle. It localises to the stress fiber. The protein localises to the nucleus. The protein resides in the cell projection. Its subcellular location is the dendrite. It is found in the perikaryon. It localises to the cell junction. The protein localises to the tight junction. Its function is as follows. F-actin cross-linking protein. Stabilizes actin and acts as a negative regulator of primary cilium formation. Positively regulates the phosphorylation of both myosin II and protein phosphatase 1 regulatory subunit PPP1R12A/MYPT1 and promotes the assembly of myosin II stacks within actin stress fibers. Inhibits the phosphorylation of myosin light chain MYL9 by DAPK3 and suppresses the constriction velocity of the contractile ring during cytokinesis. Binds to microtubules and promotes epithelial cell apical constriction by up-regulating levels of diphosphorylated myosin light chain (MLC) through microtubule-dependent inhibition of MLC dephosphorylation by myosin phosphatase. Involved in regulation of cell migration, nuclear size and centriole number, probably through regulation of the actin cytoskeleton. Component of the CERF-1 and CERF-5 chromatin remodeling complexes in embryonic stem cells where it acts to stabilize the complexes. Plays a role in embryonic brain and cardiovascular development. The chain is Leucine zipper protein 1 (Luzp1) from Mus musculus (Mouse).